Here is a 99-residue protein sequence, read N- to C-terminus: Aspartyl/glutamyl-tRNA(Asn/Gln) amidotransferase subunit C (99 aa).

It belongs to the GatC family. In terms of assembly, heterotrimer of A, B and C subunits.

It catalyses the reaction L-glutamyl-tRNA(Gln) + L-glutamine + ATP + H2O = L-glutaminyl-tRNA(Gln) + L-glutamate + ADP + phosphate + H(+). It carries out the reaction L-aspartyl-tRNA(Asn) + L-glutamine + ATP + H2O = L-asparaginyl-tRNA(Asn) + L-glutamate + ADP + phosphate + 2 H(+). Its function is as follows. Allows the formation of correctly charged Asn-tRNA(Asn) or Gln-tRNA(Gln) through the transamidation of misacylated Asp-tRNA(Asn) or Glu-tRNA(Gln) in organisms which lack either or both of asparaginyl-tRNA or glutaminyl-tRNA synthetases. The reaction takes place in the presence of glutamine and ATP through an activated phospho-Asp-tRNA(Asn) or phospho-Glu-tRNA(Gln). The sequence is that of Aspartyl/glutamyl-tRNA(Asn/Gln) amidotransferase subunit C from Solibacter usitatus (strain Ellin6076).